Consider the following 570-residue polypeptide: MPDSGNIQLDTLQHKDHSQETTSHYEGGSQLPEQESLDTNIQDDSVEYPGLIRVILITMGVALCSFCVGLDNTILATAIPKITSEFNSLEDMSWYVSAYLLVTSAFILSFGKIYTYYSVKWTYLISLGLFELGSLICAITPSSAGLIVGRAISGLGSAGLFPGSVIILSNIAPLHQRPLLTAFIGIMSGIATVTGPILGGVFTDRLSWRWCFYINLPIGGVTAVVVFLFMKTMKVKKNVPTSQKIKGLDWIGTAVFIPAIVSLLLALQWGGARYNWQNVRIIMLFIIAGVLGMVWLLIQRWKKEEATIPPRLMQRRSVVGTCIYTIPFVGCVIVLGYYLPIWFQSVKGVSASQSGIMNLPTVVGTIVVGLLSSVLIMRVGYMMPFLVLGSVMLAVGAGLCSTFQRSSGSAEWIGYQAMIGMGAGLGYQLPLLVVQADVPAADVPVATAVVIFMQNLAGSIFSAIAQTVFQNQLANSVQILAPSVNPESILDGGTVDLSDRFPSDVLPSILQAYNTAVTHTFYAGVAAASLSVFGAFIVRWNVSVKKKVPPEPLVPGGSHSGAERDSKNGT.

Residues Met1–Thr11 show a composition bias toward polar residues. The segment at Met1–Gln34 is disordered. The next 14 membrane-spanning stretches (helical) occupy residues Gly50–Leu70, Trp94–Tyr114, Trp121–Pro141, Ala151–Ile171, Ala182–Phe202, Trp210–Met230, Gly247–Leu267, Asn278–Ile298, Ile323–Phe343, Ile356–Ile376, Val379–Leu399, Ile413–Val433, Val445–Ala465, and Val517–Ile537. The N-linked (GlcNAc...) asparagine glycan is linked to Asn541. A disordered region spans residues Pro550–Thr570. The span at Gly561–Thr570 shows a compositional bias: basic and acidic residues.

It belongs to the major facilitator superfamily. TCR/Tet family.

It localises to the cell membrane. Its function is as follows. MFS-type transporter; part of the gene cluster that mediates the biosynthesis of the indole diterpenes penitrems. May be involved in the efflux of penitrems. This chain is MFS-type transporter ptmT, found in Penicillium ochrochloron.